Consider the following 326-residue polypeptide: MDAVLLEHFPGALDTFPSSYFDEEDFFTDQSSRDPLEDGDELLGDEQAEVEFLSHQLHEYCYRDGACLLLQPAPSAAPHALAPPPLGDPGEPEDSGSYCCDAGAPLGAFPYSPGSPPSCLAYPCTAVLSPGTRLRGLNGAAAAAAAAARRRRRVRSEAELQQLRQAANVRERRRMQSINDAFEGLRSHIPTLPYEKRLSKVDTLRLAIGYINFLSELVQADLPLRGSGTGGCGGPGGSRHLGGDSPGNQAQKVIICHRGTRSPSPSDPDYGLPPLAGHSLSWADEKQLKEQNIIRTAKVWTPEDPRKLNSKSFDNIENEPPFEFVS.

Residues 162–214 (QLRQAANVRERRRMQSINDAFEGLRSHIPTLPYEKRLSKVDTLRLAIGYINFL) enclose the bHLH domain. The span at 229–240 (TGGCGGPGGSRH) shows a compositional bias: gly residues. Disordered stretches follow at residues 229–249 (TGGC…PGNQ) and 304–326 (DPRK…EFVS).

In terms of assembly, component of the pancreas transcription factor 1 complex (PTF1) which is composed of TCF3/p75, TCF12/p64 and PTF1A/p48. TCF3 is responsible for the nuclear import of the p48/p64 complex. Interacts with TCF3 and RBPSUH/RBP-Jkappa. Exocrine pancreas-specific. Expressed in azaserine-induced pancreatic tumors (at protein level). Expressed in AR42J cells but not in ARIP, DSL6A, or DSL6B cells. Down-regulation is associated with the change of an azaserine-induced acinar cell carcinoma to a ductal phenotype.

Its subcellular location is the nucleus. It is found in the cytoplasm. In terms of biological role, transcription factor implicated in the cell fate determination in various organs. Binds to the E-box consensus sequence 5'-CANNTG-3'. Plays a role in early and late pancreas development and differentiation. Important for determining whether cells allocated to the pancreatic buds continue towards pancreatic organogenesis or revert back to duodenal fates. May be involved in the maintenance of exocrine pancreas-specific gene expression including ELA1 and amylase. Required for the formation of pancreatic acinar and ductal cells. Plays an important role in cerebellar development. Directly regulated by FOXN4 and RORC during retinal development, FOXN4-PTF1A pathway plays a central role in directing the differentiation of retinal progenitors towards horizontal and amacrine fates. This is Pancreas transcription factor 1 subunit alpha (Ptf1a) from Rattus norvegicus (Rat).